We begin with the raw amino-acid sequence, 1434 residues long: Probable ATP-dependent RNA helicase spindle-E (1434 aa).

Residues 125–292 (LAAINAHPVV…FTTTNSIPPV (168 aa)) form the Helicase ATP-binding domain. Residue 138 to 145 (GETGCGKT) coordinates ATP. Residues 238–241 (DEVH) carry the DEAH box motif. The Helicase C-terminal domain occupies 354–526 (QSRQSYDEAL…NSVLKAKVLN (173 aa)). Residues 938 to 1001 (ASAIAKGMMV…RLMPRELTEQ (64 aa)) enclose the Tudor domain.

Belongs to the DEAD box helicase family. DEAH subfamily.

Its subcellular location is the cytoplasm. It localises to the perinuclear region. The protein resides in the cytoplasmic ribonucleoprotein granule. It catalyses the reaction ATP + H2O = ADP + phosphate + H(+). In terms of biological role, probable ATP-binding RNA helicase which plays a central role during spermatogenesis and oogenesis by repressing transposable elements and preventing their mobilization, which is essential for the germline integrity. Acts via the piRNA metabolic process, which mediates the repression of transposable elements during meiosis by forming complexes composed of piRNAs and Piwi and govern the methylation and subsequent repression of transposons. Involved in the repression of LTR retrotransposon copia. Also involved in telomere regulation by repressing specialized telomeric retroelements HeT-A, TAHRE, and TART; Drosophila telomeres being maintained by transposition of specialized telomeric retroelements. Involved in telomeric trans-silencing, a repression mechanism by which a transposon or a transgene inserted in subtelomeric heterochromatin has the capacity to repress in trans in the female germline, a homologous transposon, or transgene located in euchromatin. Involved in the repression of testis-expressed Stellate genes by the homologous Su(Ste) repeats. Required for anteroposterior and dorsoventral axis formation during oogenesis. Key component of the perinuclear meiotic nuage, an electron dense structure involved in the post-transcriptional regulation of transposons and mRNAs; required for recruitment of other nuage comonents including vas, krimp, aub and mael. May have a role in production of piwi-interacting RNA (piRNA). The chain is Probable ATP-dependent RNA helicase spindle-E from Drosophila melanogaster (Fruit fly).